A 60-amino-acid polypeptide reads, in one-letter code: Large ribosomal subunit protein bL32 (60 aa).

Residues 1–20 (MAVPKRKTSPSRRNMRRSHH) show a composition bias toward basic residues. A disordered region spans residues 1 to 60 (MAVPKRKTSPSRRNMRRSHHALGANSFIEDKDTGELRRPHHVDLKTGMYNGKQILTPKED). Positions 28-44 (IEDKDTGELRRPHHVDL) are enriched in basic and acidic residues.

This sequence belongs to the bacterial ribosomal protein bL32 family.

This is Large ribosomal subunit protein bL32 from Caulobacter vibrioides (strain ATCC 19089 / CIP 103742 / CB 15) (Caulobacter crescentus).